Consider the following 379-residue polypeptide: Cytochrome b (379 aa).

A run of 4 helical transmembrane segments spans residues 33–53 (FGSL…FLAM), 77–98 (WLIR…FIHV), 113–133 (WNIG…GYVL), and 178–198 (FFAF…VHLL). Heme b contacts are provided by His83 and His97. 2 residues coordinate heme b: His182 and His196. His201 lines the a ubiquinone pocket. 4 consecutive transmembrane segments (helical) span residues 226–246 (TKDL…TLFF), 288–308 (LGGV…PLLN), 320–340 (ITQT…WIGG), and 347–367 (FTTI…ILIP).

This sequence belongs to the cytochrome b family. In terms of assembly, the cytochrome bc1 complex contains 11 subunits: 3 respiratory subunits (MT-CYB, CYC1 and UQCRFS1), 2 core proteins (UQCRC1 and UQCRC2) and 6 low-molecular weight proteins (UQCRH/QCR6, UQCRB/QCR7, UQCRQ/QCR8, UQCR10/QCR9, UQCR11/QCR10 and a cleavage product of UQCRFS1). This cytochrome bc1 complex then forms a dimer. Requires heme b as cofactor.

It is found in the mitochondrion inner membrane. Functionally, component of the ubiquinol-cytochrome c reductase complex (complex III or cytochrome b-c1 complex) that is part of the mitochondrial respiratory chain. The b-c1 complex mediates electron transfer from ubiquinol to cytochrome c. Contributes to the generation of a proton gradient across the mitochondrial membrane that is then used for ATP synthesis. The protein is Cytochrome b (MT-CYB) of Akodon azarae (Azara's grass mouse).